Consider the following 83-residue polypeptide: Small ribosomal subunit protein bS16 (83 aa).

This sequence belongs to the bacterial ribosomal protein bS16 family.

This is Small ribosomal subunit protein bS16 from Shewanella amazonensis (strain ATCC BAA-1098 / SB2B).